The sequence spans 1017 residues: Semaphorin-6D (1017 aa).

The first 20 residues, 1–20 (MRVFLLCAYILLLMISQLRA), serve as a signal peptide directing secretion. Topologically, residues 21–606 (VSFPEDDEPL…GESNQMVHMN (586 aa)) are extracellular. Residues 27–512 (DEPLNTVDYH…FSSCVIRIPL (486 aa)) enclose the Sema domain. An N-linked (GlcNAc...) asparagine glycan is attached at Asn51. 4 disulfides stabilise this stretch: Cys108–Cys118, Cys136–Cys145, Cys259–Cys370, and Cys284–Cys329. N-linked (GlcNAc...) asparagine glycosylation is present at Asn283. 2 N-linked (GlcNAc...) asparagine glycosylation sites follow: Asn435 and Asn461. 4 disulfides stabilise this stretch: Cys477-Cys506, Cys515-Cys533, Cys521-Cys568, and Cys525-Cys541. A PSI domain is found at 514–569 (RCERYGSCKKSCIASRDPYCGWLSQGSCGRVTPGMLAEGYEQDAEFGNTAHLGDCH). A helical transmembrane segment spans residues 607 to 627 (VLITCVFAAFVLGAFIAGVAV). Residues 628-1017 (YCYRDMFVRK…SVRPLNKYTY (390 aa)) are Cytoplasmic-facing. Residues Ser667, Ser678, and Ser688 each carry the phosphoserine modification. Disordered regions lie at residues 688-719 (SRKE…PTPE), 731-769 (AMKS…GHIP), 783-818 (TSFS…RSVD), and 873-912 (LYSP…HKNS). At Thr717 the chain carries Phosphothreonine. The segment covering 734–749 (SHSEKAHGHGASRKET) has biased composition (basic and acidic residues). 3 positions are modified to phosphoserine: Ser875, Ser901, and Ser927. Positions 875–886 (SPPSTLPRNSPT) are enriched in polar residues. Residues 965–981 (LQPSLSRQSSYTSNGTL) are compositionally biased toward polar residues. The disordered stretch occupies residues 965–1017 (LQPSLSRQSSYTSNGTLPRTGLKRTPSLKPDVPPKPSFVPQTPSVRPLNKYTY).

This sequence belongs to the semaphorin family.

The protein localises to the cell membrane. Shows growth cone collapsing activity on dorsal root ganglion (DRG) neurons in vitro. May be a stop signal for the DRG neurons in their target areas, and possibly also for other neurons. May also be involved in the maintenance and remodeling of neuronal connections. Ligand of TREM2 with PLXNA1 as coreceptor in dendritic cells, plays a role in the generation of immune responses and skeletal homeostasis. The sequence is that of Semaphorin-6D (SEMA6D) from Pongo abelii (Sumatran orangutan).